Consider the following 605-residue polypeptide: YTH domain-containing protein ECT4 (605 aa).

2 disordered regions span residues glycine 249–histidine 274 and glutamate 357–aspartate 384. The segment covering lysine 256 to histidine 274 has biased composition (polar residues). Over residues lysine 368–phenylalanine 383 the composition is skewed to basic and acidic residues. The YTH domain occupies alanine 414–phenylalanine 551. Residues lysine 420–tyrosine 422, aspartate 426, tryptophan 436–alanine 437, asparagine 469, tryptophan 493, tryptophan 498, and tryptophan 506 each bind RNA. The segment at lysine 580–methionine 605 is disordered.

In terms of tissue distribution, expressed in the shoot apex, at the sites of leaf formation, and in emerging leaves.

It is found in the cytoplasm. In terms of biological role, specifically recognizes and binds N6-methyladenosine (m6A)-containing RNAs, and regulates mRNA stability. M6A is a modification present at internal sites of mRNAs and some non-coding RNAs and plays a role in mRNA stability and processing. Required for the correct timing of leaf formation and normal leaf morphology. The chain is YTH domain-containing protein ECT4 from Arabidopsis thaliana (Mouse-ear cress).